We begin with the raw amino-acid sequence, 341 residues long: Heme A synthase (341 aa).

A run of 5 helical transmembrane segments spans residues 11–31 (AVST…IIGG), 101–121 (LIGL…HLSA), 127–147 (LFGL…MVAS), 160–180 (LATH…FSLE), and 194–214 (AGVT…GAFV). Histidine 259 provides a ligand contact to heme. The next 3 helical transmembrane spans lie at 261 to 278 (WTGY…WQVW), 288 to 308 (FMVI…AALL), and 315 to 335 (LSLA…AAAW). Residue histidine 319 coordinates heme.

It belongs to the COX15/CtaA family. Type 2 subfamily. As to quaternary structure, interacts with CtaB. Heme b serves as cofactor.

The protein localises to the cell membrane. The enzyme catalyses Fe(II)-heme o + 2 A + H2O = Fe(II)-heme a + 2 AH2. The protein operates within porphyrin-containing compound metabolism; heme A biosynthesis; heme A from heme O: step 1/1. Functionally, catalyzes the conversion of heme O to heme A by two successive hydroxylations of the methyl group at C8. The first hydroxylation forms heme I, the second hydroxylation results in an unstable dihydroxymethyl group, which spontaneously dehydrates, resulting in the formyl group of heme A. The polypeptide is Heme A synthase (Maricaulis maris (strain MCS10) (Caulobacter maris)).